The primary structure comprises 440 residues: Xylose isomerase (440 aa).

Mg(2+) is bound by residues Asp307 and Asp309.

The protein belongs to the xylose isomerase family. Homotetramer. The cofactor is Mg(2+).

It localises to the cytoplasm. The enzyme catalyses alpha-D-xylose = alpha-D-xylulofuranose. The protein is Xylose isomerase of Escherichia coli (strain K12 / MC4100 / BW2952).